Consider the following 144-residue polypeptide: Superoxide dismutase [Mn] 1 (144 aa).

Residues His42, Asp124, and His128 each coordinate Mn(2+).

It belongs to the iron/manganese superoxide dismutase family. Requires Mn(2+) as cofactor.

The catalysed reaction is 2 superoxide + 2 H(+) = H2O2 + O2. Its function is as follows. Destroys superoxide anion radicals which are normally produced within the cells and which are toxic to biological systems. The polypeptide is Superoxide dismutase [Mn] 1 (sod1) (Haloferax mediterranei (Halobacterium mediterranei)).